A 314-amino-acid polypeptide reads, in one-letter code: THAP domain-containing protein 11 (314 aa).

The THAP-type zinc finger occupies 1–80 (MPGFTCCVPG…TYTVRVPTIF (80 aa)). The disordered stretch occupies residues 85 to 111 (VNERKVARRPAGAAAARRRQQQQQQQQ). Residues 93–111 (RPAGAAAARRRQQQQQQQQ) are compositionally biased toward low complexity. An HCFC1-binding motif (HBM) motif is present at residues 243-246 (DHSY). Residues 255 to 305 (EELLRKLNEQRDILALMEVKMKEMKGSIRHLRLTEAKLREELREKDRLLAM) are a coiled coil.

It belongs to the THAP11 family. As to quaternary structure, forms homodimers. Interacts via HBM with HCFC1. Forms a complex with HCFC1 and ZNF143. Expressed in skin fibroblasts.

The protein resides in the nucleus. Its subcellular location is the cytoplasm. Transcription factor, which has both transcriptional activation and repression activities. Also modulates chromatin accessibility. In complex with HCFC1 and ZNF143, regulates the expression of several genes, including AP2S1, ESCO2, OPHN1, RBL1, UBXN8 and ZNF32. May regulate the expression of genes that encode both cytoplasmic and mitochondrial ribosomal proteins. Required for normal mitochondrial development and function. Regulates mitochondrial gene expression, including that of components of the electron transport chain. Involved in the maintainance of pluripotency in early embryonic cells, possibly through its action on mitochondrial maturation which is required to meet high energy demands of these cells. Required for early development of retina, preventing premature exit of retinal progenitor cells from the cell cycle. This effect may also be mediated by its action on mitochondria. Through the regulation of MMACHC gene expression, controls cobalamin metabolism. Required for normal brain development and neural precursor differentiation. Involved in cell growth. The polypeptide is THAP domain-containing protein 11 (THAP11) (Homo sapiens (Human)).